A 343-amino-acid chain; its full sequence is Tryptophan--tRNA ligase (343 aa).

Residues 15–17 (QPT) and 24–25 (GN) contribute to the ATP site. A 'HIGH' region motif is present at residues 16–25 (PTSDSLHLGN). D145 is a binding site for L-tryptophan. Residues 157–159 (GED), I196, and 205–209 (KMSKS) each bind ATP. A 'KMSKS' region motif is present at residues 205 to 209 (KMSKS).

Belongs to the class-I aminoacyl-tRNA synthetase family. Homodimer.

The protein localises to the cytoplasm. It catalyses the reaction tRNA(Trp) + L-tryptophan + ATP = L-tryptophyl-tRNA(Trp) + AMP + diphosphate + H(+). In terms of biological role, catalyzes the attachment of tryptophan to tRNA(Trp). The polypeptide is Tryptophan--tRNA ligase (Mycobacterium leprae (strain TN)).